A 195-amino-acid chain; its full sequence is PRELI domain containing protein 3B (195 aa).

The region spanning 1–172 (MKIWTSEHVF…VIHKLNAEIE (172 aa)) is the PRELI/MSF1 domain. Ser-46 and Ser-51 each carry phosphoserine.

The protein belongs to the slowmo family.

In Cricetulus griseus (Chinese hamster), this protein is PRELI domain containing protein 3B (PRELID3B).